The sequence spans 167 residues: Ammonium/H(+) antiporter subunit AmhM (167 aa).

The RCK C-terminal domain occupies 79-163 (IDRIKLIRKQ…IQKFEELCAC (85 aa)).

As to quaternary structure, interacts with AmhT.

It localises to the cell membrane. In terms of biological role, modulates the activity of the ammonium/proton antiporter AmhT. The chain is Ammonium/H(+) antiporter subunit AmhM (amhM) from Alkalihalophilus pseudofirmus (strain ATCC BAA-2126 / JCM 17055 / OF4) (Bacillus pseudofirmus).